Consider the following 260-residue polypeptide: Ras-related protein Rab-26 (260 aa).

The interval 1-56 (MSRKKTPKSKGGSEPATSTLPAAAAATNGPRLAHPRTVRPGPEAPPNGPPQSIRPS) is disordered. 9 residues coordinate GTP: S76, G77, V78, G79, K80, T81, C82, S99, and T100. T81 provides a ligand contact to Mg(2+). 2 short sequence motifs (switch) span residues 90 to 105 (GAFLAGTFISTVGIDF) and 123 to 140 (DTAGQERFRSVTHAYYRD). Mg(2+) is bound by residues T100 and D123. Residues G126, N181, K182, D184, A212, and R213 each coordinate GTP. 2 S-geranylgeranyl cysteine lipidation sites follow: C257 and C258.

The protein belongs to the small GTPase superfamily. Rab family. Interacts with ADRA2B. Interacts with RIMS1. The cofactor is Mg(2+). As to expression, detected in zymogenic cells in the stomach.

Its subcellular location is the cytoplasmic vesicle. The protein resides in the secretory vesicle membrane. It localises to the golgi apparatus membrane. The enzyme catalyses GTP + H2O = GDP + phosphate + H(+). Its activity is regulated as follows. Regulated by guanine nucleotide exchange factors (GEFs) which promote the exchange of bound GDP for free GTP. Regulated by GTPase activating proteins (GAPs) which increase the GTP hydrolysis activity. Inhibited by GDP dissociation inhibitors (GDIs). In terms of biological role, the small GTPases Rab are key regulators of intracellular membrane trafficking, from the formation of transport vesicles to their fusion with membranes. Rabs cycle between an inactive GDP-bound form and an active GTP-bound form that is able to recruit to membranes different set of downstream effectors directly responsible for vesicle formation, movement, tethering and fusion. RAB26 mediates transport of ADRA2A and ADRA2B from the Golgi to the cell membrane. Plays a role in the maturation of zymogenic granules and in pepsinogen secretion in the stomach. Plays a role in the secretion of amylase from acinar granules in the parotid gland. The chain is Ras-related protein Rab-26 from Mus musculus (Mouse).